We begin with the raw amino-acid sequence, 684 residues long: PAN2-PAN3 deadenylation complex subunit PAN3 (684 aa).

Disordered regions lie at residues methionine 1 to alanine 38, aspartate 68 to glutamate 97, and valine 112 to leucine 146. Residues glutamate 21–alanine 38 show a composition bias toward basic and acidic residues. The segment at glutamate 36–alanine 65 adopts a C3H1-type zinc-finger fold. Pro residues predominate over residues valine 127–proline 139. The segment at glycine 263–glycine 544 is pseudokinase domain. ATP-binding positions include arginine 326 and aspartate 375–threonine 382. Residues tyrosine 387 to proline 412 are disordered. Serine 444 to lysine 445 lines the ATP pocket. Residues proline 545–phenylalanine 583 are a coiled coil. A knob domain region spans residues isoleucine 584–arginine 684.

Belongs to the protein kinase superfamily. PAN3 family. Homodimer. Forms a heterotrimer with a catalytic subunit PAN2 to form the poly(A)-nuclease (PAN) deadenylation complex. Interacts (via PAM-2 motif) with poly(A)-binding protein PAB1 (via PABC domain), conferring substrate specificity of the enzyme complex.

Its subcellular location is the cytoplasm. Functionally, regulatory subunit of the poly(A)-nuclease (PAN) deadenylation complex, one of two cytoplasmic mRNA deadenylases involved in mRNA turnover. PAN specifically shortens poly(A) tails of RNA and the activity is stimulated by poly(A)-binding protein PAB1. PAN deadenylation is followed by rapid degradation of the shortened mRNA tails by the CCR4-NOT complex. Deadenylated mRNAs are then degraded by two alternative mechanisms, namely exosome-mediated 3'-5' exonucleolytic degradation, or deadenylation-dependent mRNA decaping and subsequent 5'-3' exonucleolytic degradation by XRN1. May also be involved in post-transcriptional maturation of mRNA poly(A) tails. PAN3 acts as a positive regulator for PAN activity, recruiting the catalytic subunit PAN2 to mRNA via its interaction with RNA and with PAB1. This is PAN2-PAN3 deadenylation complex subunit PAN3 from Cryptococcus neoformans var. neoformans serotype D (strain B-3501A) (Filobasidiella neoformans).